A 137-amino-acid chain; its full sequence is Putative pre-16S rRNA nuclease (137 aa).

The protein belongs to the YqgF nuclease family.

Its subcellular location is the cytoplasm. Could be a nuclease involved in processing of the 5'-end of pre-16S rRNA. The chain is Putative pre-16S rRNA nuclease from Clostridium perfringens (strain ATCC 13124 / DSM 756 / JCM 1290 / NCIMB 6125 / NCTC 8237 / Type A).